Here is a 238-residue protein sequence, read N- to C-terminus: MRPEGRAAGQIRPLRLTRHYTKHAEGSVLVEFGDTKVLCTASVDEGVPRFLKGQGQGWVTAEYGMLPRSTHSRMAREAAKGKQGGRTMEIQRLIARSLRAAVDLKKLGEFTITLDCDVIQADGGTRTASITGACVALADALGALVAAGKLKESPLKGMVAAVSVGIVAGGAVCDLEYVEDSAAETDMNVVMMEDGRMIEVQGTAEGEPFSHEELLTLLALARDGIGQIIQAQKTALEQ.

Phosphate contacts are provided by residues Arg86 and 124–126 (GTR).

Belongs to the RNase PH family. As to quaternary structure, homohexameric ring arranged as a trimer of dimers.

It catalyses the reaction tRNA(n+1) + phosphate = tRNA(n) + a ribonucleoside 5'-diphosphate. In terms of biological role, phosphorolytic 3'-5' exoribonuclease that plays an important role in tRNA 3'-end maturation. Removes nucleotide residues following the 3'-CCA terminus of tRNAs; can also add nucleotides to the ends of RNA molecules by using nucleoside diphosphates as substrates, but this may not be physiologically important. Probably plays a role in initiation of 16S rRNA degradation (leading to ribosome degradation) during starvation. This Edwardsiella ictaluri (strain 93-146) protein is Ribonuclease PH.